Consider the following 344-residue polypeptide: tRNA N6-adenosine threonylcarbamoyltransferase (344 aa).

Positions 111 and 115 each coordinate Fe cation. Residues 134 to 138 (LVSGG), Asp167, Gly180, and Asn274 each bind substrate. Asp302 lines the Fe cation pocket.

The protein belongs to the KAE1 / TsaD family. Requires Fe(2+) as cofactor.

The protein resides in the cytoplasm. It carries out the reaction L-threonylcarbamoyladenylate + adenosine(37) in tRNA = N(6)-L-threonylcarbamoyladenosine(37) in tRNA + AMP + H(+). Required for the formation of a threonylcarbamoyl group on adenosine at position 37 (t(6)A37) in tRNAs that read codons beginning with adenine. Is involved in the transfer of the threonylcarbamoyl moiety of threonylcarbamoyl-AMP (TC-AMP) to the N6 group of A37, together with TsaE and TsaB. TsaD likely plays a direct catalytic role in this reaction. In Dechloromonas aromatica (strain RCB), this protein is tRNA N6-adenosine threonylcarbamoyltransferase.